The following is a 308-amino-acid chain: HTH-type transcriptional activator AllS (308 aa).

Positions 2–59 (FDPETLRTFIAVAETGSFSKAAERLCKTTATISYRIKLLEENTGVALFFRTTRSVTLT) constitute an HTH lysR-type domain. A DNA-binding region (H-T-H motif) is located at residues 19 to 38 (FSKAAERLCKTTATISYRIK).

It belongs to the LysR transcriptional regulatory family.

In terms of biological role, positive regulator essential for the expression of allD operon. Binds to the allD promoter. In Escherichia coli O1:K1 / APEC, this protein is HTH-type transcriptional activator AllS (allS).